A 260-amino-acid polypeptide reads, in one-letter code: Sphinganine C4-monooxygenase 1 (260 aa).

The next 3 membrane-spanning stretches (helical) occupy residues 11–31, 55–75, and 92–112; these read LLGTVAPIVVYWLYSGIYVAL, SVVKGVLVQQVVQAVVAILLF, and FLVLARQFVTAMIVLDTWQYF. The Fatty acid hydroxylase domain maps to 99–235; it reads FVTAMIVLDT…FVMWDRILGT (137 aa). The Histidine box-1 motif lies at 114 to 118; that stretch reads HRYMH. Positions 128 to 132 match the Histidine box-2 motif; the sequence is HSQHH. The Histidine box-3 signature appears at 207 to 213; that stretch reads YHDIHHQ.

Belongs to the sterol desaturase family. It depends on Fe cation as a cofactor. Ubiquitous, with higher levels in flowers and roots.

Its subcellular location is the endoplasmic reticulum membrane. It catalyses the reaction a dihydroceramide + 2 Fe(II)-[cytochrome b5] + O2 + 2 H(+) = a phytoceramide + 2 Fe(III)-[cytochrome b5] + H2O. Its pathway is membrane lipid metabolism; sphingolipid biosynthesis. Involved in sphingolipid trihydroxy long-chain base (4-hydroxysphinganine) biosynthesis. Can use C18- and C20-sphinganine as substrates to produce C18- and C20-phytosphinganines (D-ribo-2-amino-1,3,4-trihydroxyoctadecane and -eicosane). The sequence is that of Sphinganine C4-monooxygenase 1 (SBH1) from Arabidopsis thaliana (Mouse-ear cress).